The following is a 71-amino-acid chain: Protein MMP24OS (71 aa).

Positions 1-10 (MGAQLSGGRG) are enriched in gly residues. The segment at 1 to 61 (MGAQLSGGRG…PSPWGPLDDV (61 aa)) is disordered. Residues 36–55 (HPPQPQPQPQPQPQPEPSPW) are compositionally biased toward pro residues.

The chain is Protein MMP24OS from Homo sapiens (Human).